The chain runs to 301 residues: Ornithine carbamoyltransferase (301 aa).

Carbamoyl phosphate is bound by residues 47–50 (STRT), Gln-74, Arg-98, and 125–128 (HPMQ). L-ornithine is bound by residues Asn-156, Asp-220, and 224-225 (SM). Carbamoyl phosphate-binding positions include 260-261 (CL) and Arg-288.

The protein belongs to the aspartate/ornithine carbamoyltransferase superfamily. OTCase family.

It localises to the cytoplasm. It carries out the reaction carbamoyl phosphate + L-ornithine = L-citrulline + phosphate + H(+). It functions in the pathway amino-acid biosynthesis; L-arginine biosynthesis; L-arginine from L-ornithine and carbamoyl phosphate: step 1/3. Its function is as follows. Reversibly catalyzes the transfer of the carbamoyl group from carbamoyl phosphate (CP) to the N(epsilon) atom of ornithine (ORN) to produce L-citrulline. This Picrophilus torridus (strain ATCC 700027 / DSM 9790 / JCM 10055 / NBRC 100828 / KAW 2/3) protein is Ornithine carbamoyltransferase.